Consider the following 62-residue polypeptide: Conotoxin Lt5.8 (62 aa).

The first 19 residues, 1 to 19, serve as a signal peptide directing secretion; it reads MLCLPVFIILLLLVSPAAT. Positions 20 to 47 are excised as a propeptide; sequence MPVDLEILKAPTKESRKDFEMRIELLRS. Gln-50 carries the post-translational modification Pyrrolidone carboxylic acid. Glutamine amide is present on Gln-61.

It belongs to the conotoxin T superfamily. Contains 2 disulfide bonds that can be either 'C1-C3, C2-C4' or 'C1-C4, C2-C3', since these disulfide connectivities have been observed for conotoxins with cysteine framework V (for examples, see AC P0DQQ7 and AC P81755). As to expression, expressed by the venom duct.

The protein resides in the secreted. This is Conotoxin Lt5.8 from Conus litteratus (Lettered cone).